The sequence spans 406 residues: DNA primase large subunit PriL (406 aa).

Cys302, Cys375, Cys384, and Cys389 together coordinate [4Fe-4S] cluster.

This sequence belongs to the eukaryotic-type primase large subunit family. In terms of assembly, heterodimer of a small subunit (PriS) and a large subunit (PriL). It depends on [4Fe-4S] cluster as a cofactor.

Functionally, regulatory subunit of DNA primase, an RNA polymerase that catalyzes the synthesis of short RNA molecules used as primers for DNA polymerase during DNA replication. Stabilizes and modulates the activity of the small subunit, increasing the rate of DNA synthesis, and conferring RNA synthesis capability. The DNA polymerase activity may enable DNA primase to also catalyze primer extension after primer synthesis. May also play a role in DNA repair. The chain is DNA primase large subunit PriL from Methanopyrus kandleri (strain AV19 / DSM 6324 / JCM 9639 / NBRC 100938).